Here is an 851-residue protein sequence, read N- to C-terminus: DNA mismatch repair protein MutS (851 aa).

Residue 602-609 (GPNMSGKS) coordinates ATP.

The protein belongs to the DNA mismatch repair MutS family.

In terms of biological role, this protein is involved in the repair of mismatches in DNA. It is possible that it carries out the mismatch recognition step. This protein has a weak ATPase activity. The polypeptide is DNA mismatch repair protein MutS (Streptococcus pyogenes serotype M3 (strain SSI-1)).